A 185-amino-acid polypeptide reads, in one-letter code: Large ribosomal subunit protein uL5 (185 aa).

The protein belongs to the universal ribosomal protein uL5 family. In terms of assembly, part of the 50S ribosomal subunit; part of the 5S rRNA/L5/L18/L25 subcomplex. Contacts the 5S rRNA and the P site tRNA. Forms a bridge to the 30S subunit in the 70S ribosome.

In terms of biological role, this is one of the proteins that bind and probably mediate the attachment of the 5S RNA into the large ribosomal subunit, where it forms part of the central protuberance. In the 70S ribosome it contacts protein S13 of the 30S subunit (bridge B1b), connecting the 2 subunits; this bridge is implicated in subunit movement. Contacts the P site tRNA; the 5S rRNA and some of its associated proteins might help stabilize positioning of ribosome-bound tRNAs. The protein is Large ribosomal subunit protein uL5 of Streptomyces griseus subsp. griseus (strain JCM 4626 / CBS 651.72 / NBRC 13350 / KCC S-0626 / ISP 5235).